Consider the following 187-residue polypeptide: NDERRFADGQQDYTGWMDFGRRDDEDDVNERDVRGFGSFLGKALKAALKIGANALGGSPQQREANDERRFADGQQDYTGWMDFGRRDDEDDVNERDVRGFGSFLGKALKAALKIGANALGGSLQQREVNDERRFADGQQDYTGWMDFGRRDGQQDYTGWMDFGRRDDEDDVHERDVRGFGSFLGKAL.

Residues 1-9 constitute a propeptide that is removed on maturation; sequence NDERRFADG. The interval 1-21 is disordered; it reads NDERRFADGQQDYTGWMDFGR. Tyr13 bears the Sulfotyrosine mark. Position 19 is a phenylalanine amide (Phe19). A propeptide spanning residues 23–73 is cleaved from the precursor; sequence DDEDDVNERDVRGFGSFLGKALKAALKIGANALGGSPQQREANDERRFADG. Sulfotyrosine is present on Tyr77. Residue Phe83 is modified to Phenylalanine amide. The propeptide occupies 87–137; sequence DDEDDVNERDVRGFGSFLGKALKAALKIGANALGGSLQQREVNDERRFADG. Tyr141 carries the post-translational modification Sulfotyrosine. Phe147 bears the Phenylalanine amide mark. The propeptide occupies 151-152; the sequence is DG. Tyr156 carries the post-translational modification Sulfotyrosine. At Phe162 the chain carries Phenylalanine amide. The propeptide occupies 166–187; it reads DDEDDVHERDVRGFGSFLGKAL.

It belongs to the gastrin/cholecystokinin family. As to expression, expressed by the skin glands.

It localises to the secreted. Functionally, the pharmacological activities of caerulein are quite similar to the physiological activities of gastrin and related peptides. The sequence is that of Preprocaerulein clone PXC202 from Xenopus laevis (African clawed frog).